A 493-amino-acid polypeptide reads, in one-letter code: 3-octaprenyl-4-hydroxybenzoate carboxy-lyase (493 aa).

Residue Asn172 coordinates Mn(2+). Prenylated FMN-binding positions include 175–177, 189–191, and 194–195; these read IYR, RWL, and RG. Glu238 contacts Mn(2+). The active-site Proton donor is Asp287.

This sequence belongs to the UbiD family. Homohexamer. Requires prenylated FMN as cofactor. Mn(2+) serves as cofactor.

Its subcellular location is the cell membrane. The enzyme catalyses a 4-hydroxy-3-(all-trans-polyprenyl)benzoate + H(+) = a 2-(all-trans-polyprenyl)phenol + CO2. The protein operates within cofactor biosynthesis; ubiquinone biosynthesis. In terms of biological role, catalyzes the decarboxylation of 3-octaprenyl-4-hydroxy benzoate to 2-octaprenylphenol, an intermediate step in ubiquinone biosynthesis. The sequence is that of 3-octaprenyl-4-hydroxybenzoate carboxy-lyase from Shewanella loihica (strain ATCC BAA-1088 / PV-4).